A 320-amino-acid chain; its full sequence is Lipoyl synthase (320 aa).

The interval 1–26 is disordered; the sequence is MVTVVDRVTSRRLRHPEKMHRPDTSI. Residues cysteine 59, cysteine 64, cysteine 70, cysteine 85, cysteine 89, cysteine 92, and serine 298 each contribute to the [4Fe-4S] cluster site. Residues 71-287 form the Radical SAM core domain; sequence WSQRHASFMI…AKIGKVKGFL (217 aa).

It belongs to the radical SAM superfamily. Lipoyl synthase family. It depends on [4Fe-4S] cluster as a cofactor.

The protein resides in the cytoplasm. The catalysed reaction is [[Fe-S] cluster scaffold protein carrying a second [4Fe-4S](2+) cluster] + N(6)-octanoyl-L-lysyl-[protein] + 2 oxidized [2Fe-2S]-[ferredoxin] + 2 S-adenosyl-L-methionine + 4 H(+) = [[Fe-S] cluster scaffold protein] + N(6)-[(R)-dihydrolipoyl]-L-lysyl-[protein] + 4 Fe(3+) + 2 hydrogen sulfide + 2 5'-deoxyadenosine + 2 L-methionine + 2 reduced [2Fe-2S]-[ferredoxin]. Its pathway is protein modification; protein lipoylation via endogenous pathway; protein N(6)-(lipoyl)lysine from octanoyl-[acyl-carrier-protein]: step 2/2. Functionally, catalyzes the radical-mediated insertion of two sulfur atoms into the C-6 and C-8 positions of the octanoyl moiety bound to the lipoyl domains of lipoate-dependent enzymes, thereby converting the octanoylated domains into lipoylated derivatives. In Bartonella quintana (strain Toulouse) (Rochalimaea quintana), this protein is Lipoyl synthase.